Consider the following 582-residue polypeptide: Transcription factor tau subunit sfc6 (582 aa).

The segment at 1 to 97 is disordered; sequence MGPKSKEYEN…SAKKQSSKGL (97 aa). A compositionally biased stretch (acidic residues) spans 18 to 39; it reads EDNDDDGDFVLENVMSEEDIEI. Positions 63–87 are enriched in polar residues; sequence QPLTPSSSKGAGNEPKSQNSSTTRG. WD repeat units follow at residues 221 to 262, 268 to 314, and 326 to 369; these read TQFL…NFKS, HDWG…VKFH, and FNDS…ECPL.

Component of the TFIIIC complex including sfc1, sfc3, sfc4, sfc6 and sfc7. The subunits are organized in two globular domains, tauA and tauB, connected by a proteolysis-sensitive and flexible linker. Interacts with sfc1, sfc3 and sfc4.

The protein resides in the nucleus. In terms of biological role, TFIIIC mediates tRNA and 5S RNA gene activation by binding to intragenic promoter elements. Upstream of the transcription start site, TFIIIC assembles the initiation complex TFIIIB-TFIIIC-tDNA, which is sufficient for RNA polymerase III recruitment and function. Part of the tauB domain of TFIIIC that binds boxB DNA promoter sites of tRNA and similar genes. Cooperates with sfc3 in DNA binding. Localizes to chromatin insulator sequence without recruiting RNA polymerase III and plays a role in nuclear organization. The protein is Transcription factor tau subunit sfc6 of Schizosaccharomyces pombe (strain 972 / ATCC 24843) (Fission yeast).